A 112-amino-acid polypeptide reads, in one-letter code: UPF0122 protein CPE1714 (112 aa).

This sequence belongs to the UPF0122 family.

Its function is as follows. Might take part in the signal recognition particle (SRP) pathway. This is inferred from the conservation of its genetic proximity to ftsY/ffh. May be a regulatory protein. The chain is UPF0122 protein CPE1714 from Clostridium perfringens (strain 13 / Type A).